The primary structure comprises 339 residues: UDP-N-acetylenolpyruvoylglucosamine reductase (339 aa).

The FAD-binding PCMH-type domain occupies 18-189; it reads GIDVKARYFS…LRVRFALTRT (172 aa). Residue R166 is part of the active site. The active-site Proton donor is S239. The active site involves E335.

It belongs to the MurB family. FAD serves as cofactor.

It localises to the cytoplasm. It carries out the reaction UDP-N-acetyl-alpha-D-muramate + NADP(+) = UDP-N-acetyl-3-O-(1-carboxyvinyl)-alpha-D-glucosamine + NADPH + H(+). It functions in the pathway cell wall biogenesis; peptidoglycan biosynthesis. Functionally, cell wall formation. The sequence is that of UDP-N-acetylenolpyruvoylglucosamine reductase from Pseudomonas putida (strain ATCC 47054 / DSM 6125 / CFBP 8728 / NCIMB 11950 / KT2440).